The chain runs to 206 residues: MDTPRRFPTLVQLMQPKAMPVEVLGHLPKRFSWFHSEFLKNPKVVRLEVWLVEKIFGRDRERIPHVQGMSQILIHVNRLDPNGEAEILVFGRPSYQEDTIKMIMNLADYHRQLQAKGSGKALAQDVATKKAEIQLSSTEVREAGTQRSVEVREVGTQGSPVEVRETGTQQSLEAANQSGTQRSPEAASKAVTQRFSEDTRAPVTRL.

Positions 1–40 (MDTPRRFPTLVQLMQPKAMPVEVLGHLPKRFSWFHSEFLK) are involved in RNA binding. In terms of domain architecture, KH; atypical spans 40-103 (KNPKVVRLEV…SYQEDTIKMI (64 aa)). Positions 144–153 (GTQRSVEVRE) are enriched in basic and acidic residues. Residues 144-206 (GTQRSVEVRE…EDTRAPVTRL (63 aa)) form a disordered region. At T145 the chain carries Phosphothreonine. A compositionally biased stretch (polar residues) spans 166 to 183 (TGTQQSLEAANQSGTQRS). The residue at position 171 (S171) is a Phosphoserine.

This sequence belongs to the KHDC1 family. Component of the subcortical maternal complex (SCMC), at least composed of NLRP5, KHDC3L, OOEP, and TLE6. Within the complex, interacts with NLRP5, KHDC3L and TLE6. The SCMC may facilitate translocation of its components between the nuclear and cytoplasmic compartments. Forms a scaffold complex with OOEP/FLOPED, and interacts with BLM and TRIM25 at DNA replication forks. Interacts with PARP1; the interaction is increased following the formation of DNA double-strand breaks. Interacts with NUMA1.

Its subcellular location is the cytoplasm. The protein localises to the cell cortex. It localises to the nucleus. It is found in the mitochondrion. The protein resides in the cytoskeleton. Its subcellular location is the microtubule organizing center. The protein localises to the centrosome. It localises to the chromosome. Its function is as follows. Component of the subcortical maternal complex (SCMC), a multiprotein complex that plays a key role in early embryonic development. The SCMC complex is a structural constituent of cytoplasmic lattices, which consist in fibrous structures found in the cytoplasm of oocytes and preimplantation embryos. They are required to store maternal proteins critical for embryonic development, such as proteins that control epigenetic reprogramming of the preimplantation embryo, and prevent their degradation or activation. KHDC3 ensures proper spindle assembly by regulating the localization of AURKA via RHOA signaling and of PLK1 via a RHOA-independent process. Required for the localization of MAD2L1 to kinetochores to enable spindle assembly checkpoint function. As part of the OOEP-KHDC3 scaffold, recruits BLM and TRIM25 to DNA replication forks, thereby promoting the ubiquitination of BLM by TRIM25, enhancing BLM retainment at replication forks and therefore promoting stalled replication fork restart. Regulates homologous recombination-mediated DNA repair via recruitment of RAD51 to sites of DNA double-strand breaks, and sustainment of PARP1 activity, which in turn modulates downstream ATM or ATR activation. Activation of ATM or ATR in response to DNA double-strand breaks may be cell-type specific. Its role in DNA double-strand break repair is independent of its role in restarting stalled replication forks. Promotes neural stem cell neurogenesis and neuronal differentiation in the hippocampus. May regulate normal development of learning, memory and anxiety. Capable of binding RNA. The sequence is that of KH domain-containing protein 3 (KHDC3L) from Macaca mulatta (Rhesus macaque).